The following is a 383-amino-acid chain: Lipid-A-disaccharide synthase (383 aa).

Belongs to the LpxB family.

The enzyme catalyses 2-N,3-O-bis[(3R)-3-hydroxytetradecanoyl]-alpha-D-glucosaminyl 1-phosphate + UDP-2-N,3-O-bis[(3R)-3-hydroxytetradecanoyl]-alpha-D-glucosamine = lipid A disaccharide (E. coli) + UDP + H(+). It carries out the reaction a lipid X + a UDP-2-N,3-O-bis[(3R)-3-hydroxyacyl]-alpha-D-glucosamine = a lipid A disaccharide + UDP + H(+). It functions in the pathway glycolipid biosynthesis; lipid IV(A) biosynthesis; lipid IV(A) from (3R)-3-hydroxytetradecanoyl-[acyl-carrier-protein] and UDP-N-acetyl-alpha-D-glucosamine: step 5/6. Condensation of UDP-2,3-diacylglucosamine and 2,3-diacylglucosamine-1-phosphate to form lipid A disaccharide, a precursor of lipid A, a phosphorylated glycolipid that anchors the lipopolysaccharide to the outer membrane of the cell. The chain is Lipid-A-disaccharide synthase from Klebsiella pneumoniae subsp. pneumoniae (strain ATCC 700721 / MGH 78578).